Consider the following 339-residue polypeptide: Heat-inducible transcription repressor HrcA (339 aa).

The protein belongs to the HrcA family.

In terms of biological role, negative regulator of class I heat shock genes (grpE-dnaK-dnaJ and groELS operons). Prevents heat-shock induction of these operons. This is Heat-inducible transcription repressor HrcA from Paraburkholderia phymatum (strain DSM 17167 / CIP 108236 / LMG 21445 / STM815) (Burkholderia phymatum).